A 460-amino-acid chain; its full sequence is Putative type II methyltransferase M.OihORF3336P (460 aa).

Residues 15–458 (PEVVDLFSGC…EAMKKNIQGG (444 aa)) form the SAM-dependent MTase C5-type domain. Cys97 is a catalytic residue.

Belongs to the class I-like SAM-binding methyltransferase superfamily. C5-methyltransferase family.

The catalysed reaction is a 2'-deoxycytidine in DNA + S-adenosyl-L-methionine = a 5-methyl-2'-deoxycytidine in DNA + S-adenosyl-L-homocysteine + H(+). A methylase, recognizes the double-stranded sequence 5'-ACCGGT-3', methylates C-? on both strands. No endonuclease has been identified for this methylase. This Oceanobacillus iheyensis (strain DSM 14371 / CIP 107618 / JCM 11309 / KCTC 3954 / HTE831) protein is Putative type II methyltransferase M.OihORF3336P.